The sequence spans 385 residues: 1-deoxy-D-xylulose 5-phosphate reductoisomerase (385 aa).

Residues Thr10, Gly11, Ser12, Ile13, Lys37, and Asn124 each coordinate NADPH. Lys125 provides a ligand contact to 1-deoxy-D-xylulose 5-phosphate. Glu126 contributes to the NADPH binding site. Residue Asp150 participates in Mn(2+) binding. 1-deoxy-D-xylulose 5-phosphate is bound by residues Ser151, Glu152, Ser176, and His199. Glu152 lines the Mn(2+) pocket. An NADPH-binding site is contributed by Gly205. 1-deoxy-D-xylulose 5-phosphate-binding residues include Ser212, Asn217, Lys218, and Glu221. Glu221 lines the Mn(2+) pocket.

It belongs to the DXR family. Requires Mg(2+) as cofactor. The cofactor is Mn(2+).

It carries out the reaction 2-C-methyl-D-erythritol 4-phosphate + NADP(+) = 1-deoxy-D-xylulose 5-phosphate + NADPH + H(+). Its pathway is isoprenoid biosynthesis; isopentenyl diphosphate biosynthesis via DXP pathway; isopentenyl diphosphate from 1-deoxy-D-xylulose 5-phosphate: step 1/6. Catalyzes the NADPH-dependent rearrangement and reduction of 1-deoxy-D-xylulose-5-phosphate (DXP) to 2-C-methyl-D-erythritol 4-phosphate (MEP). The chain is 1-deoxy-D-xylulose 5-phosphate reductoisomerase from Clostridium botulinum (strain 657 / Type Ba4).